A 213-amino-acid polypeptide reads, in one-letter code: Peroxiredoxin-5, mitochondrial (213 aa).

Residues 1 to 51 (MVQLRFCVLGSIAGSVLRASATWTCVAGRAGRKGAGWECGGARSFSSAAVT) constitute a mitochondrion transit peptide. A Thioredoxin domain is found at 55–213 (IKVGDTIPSV…SLAPNILSQL (159 aa)). Lys74 carries the post-translational modification N6-acetyllysine. At Lys82 the chain carries N6-acetyllysine; alternate. Lys82 bears the N6-succinyllysine; alternate mark. The active-site Cysteine sulfenic acid (-SOH) intermediate is Cys99. A lipid anchor (S-palmitoyl cysteine) is attached at Cys99. An intrachain disulfide couples Cys99 to Cys203. Residue Lys115 is modified to N6-succinyllysine. A phosphoserine mark is found at Ser170 and Ser181. A Microbody targeting signal motif is present at residues 211–213 (SQL).

The protein belongs to the peroxiredoxin family. Prx5 subfamily. In terms of assembly, monomer. Post-translationally, S-palmitoylated. Palmitoylation occurs on the active site, inhibiting its reactivity; therefore PRDX5 palmitoylation status determines its antioxidant capacity. S-palmitoylated. Depalmitoylated by ABHD10.

Its subcellular location is the mitochondrion. It is found in the cytoplasm. The protein resides in the peroxisome matrix. The enzyme catalyses a hydroperoxide + [thioredoxin]-dithiol = an alcohol + [thioredoxin]-disulfide + H2O. Functionally, thiol-specific peroxidase that catalyzes the reduction of hydrogen peroxide and organic hydroperoxides to water and alcohols, respectively. Plays a role in cell protection against oxidative stress by detoxifying peroxides and as sensor of hydrogen peroxide-mediated signaling events. The protein is Peroxiredoxin-5, mitochondrial of Rattus norvegicus (Rat).